We begin with the raw amino-acid sequence, 374 residues long: Alpha-N-acetylgalactosaminide alpha-2,6-sialyltransferase 2 (374 aa).

The Cytoplasmic portion of the chain corresponds to 1–7; that stretch reads MGLPRGS. A helical; Signal-anchor for type II membrane protein transmembrane segment spans residues 8–28; sequence FFWLLLLLTAACSGLLFALYF. At 29-374 the chain is on the lumenal side; sequence SAVQRYPGPA…KAGILQLYQR (346 aa). 2 cysteine pairs are disulfide-bonded: cysteine 66/cysteine 148 and cysteine 151/cysteine 317. 2 N-linked (GlcNAc...) asparagine glycosylation sites follow: asparagine 85 and asparagine 130. A CMP-N-acetyl-beta-neuraminate-binding site is contributed by asparagine 156. N-linked (GlcNAc...) asparagine glycosylation is present at asparagine 161. Asparagine 179, serine 304, and histidine 336 together coordinate CMP-N-acetyl-beta-neuraminate.

The protein belongs to the glycosyltransferase 29 family. Expressed in skeletal muscle, heart, kidney, placenta, lung and leukocytes.

Its subcellular location is the golgi apparatus membrane. It carries out the reaction a beta-D-galactosyl-(1-&gt;3)-N-acetyl-alpha-D-galactosaminyl derivative + CMP-N-acetyl-beta-neuraminate = a beta-D-galactosyl-(1-&gt;3)-[N-acetyl-alpha-neuraminyl-(2-&gt;6)]-N-acetyl-alpha-D-galactosaminyl derivative + CMP + H(+). The enzyme catalyses a 3-O-[N-acetyl-alpha-D-galactosaminyl]-L-threonyl-[protein] + CMP-N-acetyl-beta-neuraminate = a 3-O-[N-acetyl-alpha-neuraminosyl-(2-&gt;6)-N-acetyl-alpha-D-galactosaminyl]-L-threonyl-[protein] + CMP + H(+). The catalysed reaction is a 3-O-[N-acetyl-alpha-neuraminyl-(2-&gt;3)-beta-D-galactosyl-(1-&gt;3)-N-acetyl-alpha-D-galactosaminyl]-L-threonyl-[protein] + CMP-N-acetyl-beta-neuraminate = a 3-O-{alpha-Neu5Ac-(2-&gt;3)-beta-D-Gal-(1-&gt;3)-[alpha-Neu5Ac-(2-&gt;6)]-alpha-D-GalNAc}-L-threonyl-[protein] + CMP + H(+). Its pathway is protein modification; protein glycosylation. Its function is as follows. Catalyzes the transfer of N-acetylneuraminyl groups onto glycan chains in glycoproteins. Conjugates sialic acid with an alpha-2-6 linkage to N-acetylgalactosamine (GalNAc) glycan chains linked to serine or threonine in glycoproteins. Sialylates alphaGalNAc- and Galbeta1-&gt;3GalNAc-O-Ser/Thr epitopes also known as Tn and T antigens. The protein is Alpha-N-acetylgalactosaminide alpha-2,6-sialyltransferase 2 (ST6GALNAC2) of Homo sapiens (Human).